Here is a 1204-residue protein sequence, read N- to C-terminus: Bromodomain and PHD finger-containing protein 3 (1204 aa).

Disordered regions lie at residues 1 to 27 and 76 to 127; these read MRKP…KCSP and SNKE…TGSQ. Residues 89–99 show a composition bias toward basic residues; the sequence is KSKKPSSKGKR. The PHD-type 1 zinc-finger motif lies at 212 to 262; it reads DAFCCVCLDDECHNSNVILFCDICNLAVHQECYGVPYIPEGQWLCRCCLQS. The segment at 266 to 299 adopts a C2HC pre-PHD-type zinc-finger fold; the sequence is PVDCVLCPNKGGAFKQTSDGHWAHVVCAIWIPEV. The PHD-type 2 zinc-finger motif lies at 323–387; sequence LTCYICKQKG…RKTAYCEAHS (65 aa). Positions 393-464 are disordered; that stretch reads ARRKGDSPRS…KKEPEEAGRE (72 aa). Phosphoserine is present on residues S399 and S402. A compositionally biased stretch (acidic residues) spans 417–429; it reads GEEEQEEAEEEGQ. A compositionally biased stretch (basic residues) spans 442–454; that stretch reads VSKKGKMSLKQKI. N6-acetyllysine occurs at positions 445, 447, and 670. The Bromo domain occupies 588-692; sequence LELMPFTVLL…DLGGAILRHA (105 aa). Residues S712 and S739 each carry the phosphoserine modification. Residues 778 to 879 are disordered; that stretch reads RQKLAQPPPP…FLKSRKVEDE (102 aa). Residues 816 to 826 are compositionally biased toward acidic residues; sequence QQEEPEEEGDR. Phosphoserine occurs at positions 899, 961, and 964. Residues 903–1015 are disordered; the sequence is IDRLSLTNPD…ESGSDSECSL (113 aa). Positions 979 to 990 are enriched in basic and acidic residues; the sequence is SCSDSEGERSPQ. The PWWP domain occupies 1075–1158; the sequence is PLELVWAKCR…RDKVLPLGVE (84 aa).

Component of some HBO1 complexes composed of KAT7/HBO1, MEAF6, ING4 or ING5, and BRPF3. Component of the MOZ/MORF complex composed at least of ING5, KAT6A, KAT6B, MEAF6 and one of BRPF1, BRD1/BRPF2 and BRPF3. Interacts with KAT7/HBO1; the interaction is direct. Highly expressed in the adult testis and brain.

The protein resides in the nucleus. In terms of biological role, scaffold subunit of various histone acetyltransferase (HAT) complexes, such as the MOZ/MORF and HBO1 complexes, which have a histone H3 acetyltransferase activity. Plays a role in DNA replication initiation by directing KAT7/HBO1 specificity towards histone H3 'Lys-14' acetylation (H3K14ac), thereby facilitating the activation of replication origins. Component of the MOZ/MORF complex which has a histone H3 acetyltransferase activity. The sequence is that of Bromodomain and PHD finger-containing protein 3 from Mus musculus (Mouse).